A 249-amino-acid chain; its full sequence is ATP synthase subunit a, chloroplastic (249 aa).

Helical transmembrane passes span 40–60 (QVLI…VIAI), 97–117 (VPFI…GALL), 136–156 (INTT…AGLS), 201–221 (LVVV…VMFL), and 222–242 (GLFT…AYIG).

It belongs to the ATPase A chain family. F-type ATPases have 2 components, CF(1) - the catalytic core - and CF(0) - the membrane proton channel. CF(1) has five subunits: alpha(3), beta(3), gamma(1), delta(1), epsilon(1). CF(0) has four main subunits: a, b, b' and c.

The protein resides in the plastid. Its subcellular location is the chloroplast thylakoid membrane. Its function is as follows. Key component of the proton channel; it plays a direct role in the translocation of protons across the membrane. The protein is ATP synthase subunit a, chloroplastic of Barbarea verna (Land cress).